A 506-amino-acid chain; its full sequence is MEEFKRNLELDRSQQHDFIYPLIFQEYIYALAHDRGLNRSIFLENTGYENKSSLLIVKRLITHLITQMYQQNHFLFSGNDSNQNKFLGYNTNLYSQMIFGGFAVVVEIPFYLRLLSFLEAKERVKSHNLRSIHSIFPFLEDKFSHLVYVLDILISHPIHLEIVIQTLRYWVKDASSLHLLRFFLHEYPIWNSLITPKKSSFSFSIRNQRFFLFLYNFHVCEYESIFVFLRNQSSHLRSISSETFLERISFYRKIELEVFTKDFKAIIWVFKEPFLHYVRYRGKAILASKGTSLLMNKWKYYLVNFWQCYFYMWSQPRRIHINQLSNHSLDFLGYLSTVRLKPLMVRSQMIENSFIIGNASKKFDTLMPITPMIGSLSKAKFCNVLGHPMSKPVWAALSDSDIIERFGRIYRNLSHYYSGSLKKMSLYRIKYILRLSCARTLARKHKSTVRAFLKRLGVGLLEEFFTEEEQVFYLTFAKASSNSGELYRRRVWYLDIICINDLANYE.

Belongs to the intron maturase 2 family. MatK subfamily.

Its subcellular location is the plastid. It is found in the chloroplast. Usually encoded in the trnK tRNA gene intron. Probably assists in splicing its own and other chloroplast group II introns. This is Maturase K from Rhododendron hippophaeoides (Rhododendron).